Here is a 382-residue protein sequence, read N- to C-terminus: Gibberellin 2-beta-dioxygenase 1 (382 aa).

The region spanning D189–P321 is the Fe2OG dioxygenase domain. Y199 provides a ligand contact to 2-oxoglutarate. The Fe cation site is built by H241, D243, and H302. Residues R312 and S314 each contribute to the 2-oxoglutarate site.

This sequence belongs to the iron/ascorbate-dependent oxidoreductase family. GA2OX subfamily. The cofactor is L-ascorbate. Fe(2+) is required as a cofactor. Expressed in roots, shoot apex, and in the basal region of leaf primordia and young leaves.

It carries out the reaction gibberellin A1 + 2-oxoglutarate + O2 = gibberellin A8 + succinate + CO2. In terms of biological role, catalyzes the 2-beta-hydroxylation of several biologically active gibberellins, leading to the homeostatic regulation of their endogenous level. Catabolism of gibberellins (GAs) plays a central role in plant development. Controls the level of bioactive GAs in the shoot apical meristem, which regulates the vegetative to reproductive phase transition. In vitro, converts GA1, GA4, GA9, GA20, and GA44 to the corresponding 2-beta-hydroxylated products GA8, GA34, GA51, GA29, and GA98, respectively. This Oryza sativa subsp. japonica (Rice) protein is Gibberellin 2-beta-dioxygenase 1.